The primary structure comprises 863 residues: Leucine--tRNA ligase (863 aa).

The 'HIGH' region signature appears at 42-52 (PYPSGKIHMGH). The 'KMSKS' region motif lies at 618-622 (KMSKS). ATP is bound at residue lysine 621.

This sequence belongs to the class-I aminoacyl-tRNA synthetase family.

Its subcellular location is the cytoplasm. The catalysed reaction is tRNA(Leu) + L-leucine + ATP = L-leucyl-tRNA(Leu) + AMP + diphosphate. This Desulfatibacillum aliphaticivorans protein is Leucine--tRNA ligase.